The following is a 231-amino-acid chain: Uracil-DNA glycosylase (231 aa).

The active-site Proton acceptor is Asp70.

This sequence belongs to the uracil-DNA glycosylase (UDG) superfamily. UNG family.

The protein localises to the cytoplasm. The enzyme catalyses Hydrolyzes single-stranded DNA or mismatched double-stranded DNA and polynucleotides, releasing free uracil.. In terms of biological role, excises uracil residues from the DNA which can arise as a result of misincorporation of dUMP residues by DNA polymerase or due to deamination of cytosine. This Campylobacter curvus (strain 525.92) protein is Uracil-DNA glycosylase.